The chain runs to 286 residues: D-tagatose-1,6-bisphosphate aldolase subunit KbaY (286 aa).

D82 serves as the catalytic Proton donor. Positions 83 and 180 each coordinate Zn(2+). Dihydroxyacetone phosphate is bound at residue G181. H208 is a binding site for Zn(2+). Dihydroxyacetone phosphate-binding positions include 209–211 (GAS) and 230–233 (NVAT).

This sequence belongs to the class II fructose-bisphosphate aldolase family. TagBP aldolase KbaY subfamily. In terms of assembly, homotetramer. Forms a complex with KbaZ. It depends on Zn(2+) as a cofactor.

It catalyses the reaction D-tagatofuranose 1,6-bisphosphate = D-glyceraldehyde 3-phosphate + dihydroxyacetone phosphate. It participates in carbohydrate metabolism; D-tagatose 6-phosphate degradation; D-glyceraldehyde 3-phosphate and glycerone phosphate from D-tagatose 6-phosphate: step 2/2. Its function is as follows. Catalytic subunit of the tagatose-1,6-bisphosphate aldolase KbaYZ, which catalyzes the reversible aldol condensation of dihydroxyacetone phosphate (DHAP or glycerone-phosphate) with glyceraldehyde 3-phosphate (G3P) to produce tagatose 1,6-bisphosphate (TBP). Requires KbaZ subunit for full activity and stability. In Escherichia coli O45:K1 (strain S88 / ExPEC), this protein is D-tagatose-1,6-bisphosphate aldolase subunit KbaY.